The chain runs to 230 residues: Acetyltransferase (230 aa).

One can recognise an N-acetyltransferase domain in the interval 143-230 (RYLDGKVICD…RVAVYKARQT (88 aa)).

It functions in the pathway mycotoxin biosynthesis. Its function is as follows. Acetyltransferase; part of the satratoxin SC3 cluster involved in the biosynthesis of satratoxins, trichothecene mycotoxins that are associated with human food poisonings. Satratoxins are suggested to be made by products of multiple gene clusters (SC1, SC2 and SC3) that encode 21 proteins in all, including polyketide synthases, acetyltransferases, and other enzymes expected to modify the trichothecene skeleton. SC1 encodes 10 proteins, SAT1 to SAT10. The largest are SAT8, which encodes a putative polyketide synthase (PKS) with a conventional non-reducing architecture, and SAT10, a putative protein containing four ankyrin repeats and thus may be involved in protein scaffolding. The putative short-chain reductase SAT3 may assist the PKS in some capacity. SAT6 contains a secretory lipase domain and acts probably as a trichothecene esterase. SAT5 encodes a putative acetyltransferase, and so, with SAT6, may affect endogenous protection from toxicity. The probable transcription factor SAT9 may regulate the expression of the SC1 cluster. SC2 encodes proteins SAT11 to SAT16, the largest of which encodes the putative reducing PKS SAT13. SAT11 is a cytochrome P450 monooxygenase, while SAT14 and SAT16 are probable acetyltransferases. The SC2 cluster may be regulated by the transcription factor SAT15. SC3 is a small cluster that encodes 5 proteins, SAT17 to SAT21. SAT21 is a putative MFS-type transporter which may have a role in exporting secondary metabolites. The four other proteins putatively encoded in SC3 include the taurine hydroxylase-like protein SAT17, the O-methyltransferase SAT18, the acetyltransferase SAT19, and the Cys6-type zinc finger SAT20, the latter being probably involved in regulation of SC3 expression. The protein is Acetyltransferase of Stachybotrys chartarum (strain CBS 109288 / IBT 7711) (Toxic black mold).